The following is a 351-amino-acid chain: MLGHNILTLGECDELDNHIVMCSTGLLSPQEDFSNVNAGHPNNEEAICSLCDKKIRDRFVSKVNGRCYHSSCLRCSTCKDELGATCFLREDSMYCRAHFYKKFGTKCSSCNEGIVPDHVVRKASNHVYHVECFQCFICKRSLETGEEFYLIADDARLVCKDDYEQARDKHCNELEGDGSNKRPRTTISAKSLETLKQAYQTSSKPARHVREQLASETGLDMRVVQVWFQNRRAKEKRLKKDAGRRWKSSNRAESDSNSPIESINGQSPNYLYLDHPMDDGNESNYLFHSREQTPDKYYRNETPSTDPPPMHMTTPSVLTTNFSTPLSLSTNVYNLPPPESQLIPHMTPQYI.

LIM zinc-binding domains are found at residues 46–105 and 105–169; these read AICS…KFGT and TKCS…ARDK. Positions 180 to 239 form a DNA-binding region, homeobox; it reads NKRPRTTISAKSLETLKQAYQTSSKPARHVREQLASETGLDMRVVQVWFQNRRAKEKRLK. The span at 238-254 shows a compositional bias: basic and acidic residues; that stretch reads LKKDAGRRWKSSNRAES. Positions 238–268 are disordered; it reads LKKDAGRRWKSSNRAESDSNSPIESINGQSP. Over residues 255-268 the composition is skewed to polar residues; the sequence is DSNSPIESINGQSP.

Interacts (via LIM zinc-binding domains 1 and 2) with lim-7 (via LID domain). May interact with itself. May interact with homeobox protein ceh-63. As to expression, expressed in the anterior AFDL/R sensory neurons and BDUL/R and ALA interneurons, and in PVT, PVQL/R, DVC, PVNL/R, PVWL/R, PVR, PHCL/R, PHAL/R and PHBL/R cells in the tail region.

It localises to the nucleus. Its function is as follows. Probable transcription factor, modulating expression of helix-loop-helix protein mbr-1 and homeobox protein ceh-63, perhaps acting in concert with ceh-63. Binds to a motif including the sequence 5'-CTAAT-3' in regulatory promoter elements. Confers thermosensory function to neurons. Required for correct AFD-mediated thermotaxis. In concert with homeobox protein ttx-1, perhaps as components in a complex, specifies identity of AFD neurons, acting by synergistically regulating receptor-type guanylyl cyclase gcy-8, gcy-18 and other genes. Involved in postembryonic differentiation of the ALA neuron, and regulation of genes that contribute to behavioral quiescence, a sleep-like behavior mediated by ALA. Regulates its own expression and also that of homeodomain ceh-17, together forming an autoregulatory loop in the ALA neuron. Required for initial pathfinding of the ALA axons, but largely dispensable for axon migration. Involved in regulating postembryonic axon maintenance in the ventral nerve cord, acting in concert with LIM homeobox protein lim-6, via modulation of expression of immunoglobulin domain zig genes in the interneuron PVT. Plays a role in controlling the peptidergic identity of the BDU neurons, regulating expression of flp-10, nlp-1, and nlp-15, thereby modulating the harsh touch response. The protein is LIM/homeobox protein ceh-14 (ceh-14) of Caenorhabditis elegans.